The primary structure comprises 508 residues: Photosystem II CP47 reaction center protein (508 aa).

Transmembrane regions (helical) follow at residues 21–36 (SVHI…WAGS), 101–115 (IVFS…IWHW), 140–156 (GIHL…FGAF), 203–218 (IAAG…FHLS), 237–252 (VLSS…AFVV), and 457–472 (SFAL…HGSR).

The protein belongs to the PsbB/PsbC family. PsbB subfamily. PSII is composed of 1 copy each of membrane proteins PsbA, PsbB, PsbC, PsbD, PsbE, PsbF, PsbH, PsbI, PsbJ, PsbK, PsbL, PsbM, PsbT, PsbX, PsbY, PsbZ, Psb30/Ycf12, at least 3 peripheral proteins of the oxygen-evolving complex and a large number of cofactors. It forms dimeric complexes. The cofactor is Binds multiple chlorophylls. PSII binds additional chlorophylls, carotenoids and specific lipids..

It is found in the plastid. The protein localises to the chloroplast thylakoid membrane. Functionally, one of the components of the core complex of photosystem II (PSII). It binds chlorophyll and helps catalyze the primary light-induced photochemical processes of PSII. PSII is a light-driven water:plastoquinone oxidoreductase, using light energy to abstract electrons from H(2)O, generating O(2) and a proton gradient subsequently used for ATP formation. This is Photosystem II CP47 reaction center protein from Draba nemorosa (Woodland whitlowgrass).